The sequence spans 49 residues: MRVKVTLACTECKQRNYNTTKNKKNNPDRIELQKYCRFCKKHTTHKETK.

It belongs to the bacterial ribosomal protein bL33 family.

The sequence is that of Large ribosomal subunit protein bL33 from Clostridioides difficile (strain 630) (Peptoclostridium difficile).